Consider the following 501-residue polypeptide: V-type proton ATPase subunit B 2 (501 aa).

R392 contributes to the ATP binding site.

It belongs to the ATPase alpha/beta chains family. In terms of assembly, V-ATPase is a heteromultimeric enzyme made up of two complexes: the ATP-hydrolytic V1 complex and the proton translocation V0 complex. The V1 complex consists of three catalytic AB heterodimers that form a heterohexamer, three peripheral stalks each consisting of EG heterodimers, one central rotor including subunits D and F, and the regulatory subunits C and H. The proton translocation complex V0 consists of the proton transport subunit a, a ring of proteolipid subunits c9c'', rotary subunit d, subunits e and f, and the accessory subunits vah-19/Ac45 and vah-20/PRR. Predominantly expressed in male and hermaphrodite testis (at protein level).

The protein resides in the cytoplasm. Functionally, non-catalytic subunit of the V1 complex of vacuolar(H+)-ATPase (V-ATPase), a multisubunit enzyme composed of a peripheral complex (V1) that hydrolyzes ATP and a membrane integral complex (V0) that translocates protons. V-ATPase is responsible for acidifying and maintaining the pH of intracellular compartments and in some cell types, is targeted to the plasma membrane, where it is responsible for acidifying the extracellular environment. In neurons, required for necrotic cell death probably by promoting intracellular acidification. Required for spermatogenesis where it regulates the fibrous body-membranous organelle (FBMO) morphology in spermatocytes and the acidification of FBMO-derived secretory membranous organelles (MOs) as spermatids mature. The chain is V-type proton ATPase subunit B 2 from Caenorhabditis elegans.